Reading from the N-terminus, the 172-residue chain is Protein GrpE (172 aa).

Residues 1–24 (MNQDHPEFDSEDLAQNPPETDPLK) are disordered.

The protein belongs to the GrpE family. In terms of assembly, homodimer.

The protein localises to the cytoplasm. In terms of biological role, participates actively in the response to hyperosmotic and heat shock by preventing the aggregation of stress-denatured proteins, in association with DnaK and GrpE. It is the nucleotide exchange factor for DnaK and may function as a thermosensor. Unfolded proteins bind initially to DnaJ; upon interaction with the DnaJ-bound protein, DnaK hydrolyzes its bound ATP, resulting in the formation of a stable complex. GrpE releases ADP from DnaK; ATP binding to DnaK triggers the release of the substrate protein, thus completing the reaction cycle. Several rounds of ATP-dependent interactions between DnaJ, DnaK and GrpE are required for fully efficient folding. This chain is Protein GrpE, found in Xanthomonas oryzae pv. oryzae (strain PXO99A).